The chain runs to 166 residues: Vasopressin-neurophysin 2-copeptin (166 aa).

Residues 1–19 (MPDATLPACFLSLLAFTSA) form the signal peptide. Cysteine 20 and cysteine 25 are joined by a disulfide. At glycine 28 the chain carries Glycine amide. 7 disulfide bridges follow: cysteine 41–cysteine 85, cysteine 44–cysteine 58, cysteine 52–cysteine 75, cysteine 59–cysteine 65, cysteine 92–cysteine 104, cysteine 98–cysteine 116, and cysteine 105–cysteine 110. The N-linked (GlcNAc...) asparagine glycan is linked to asparagine 133.

Belongs to the vasopressin/oxytocin family. Interacts with vasopressin receptors V1bR/AVPR1B (Ki=85 pM), V1aR/AVPR1A (Ki=0.6 nM) and V2R/AVPR2 (Ki=4.9 nM). Interacts with oxytocin receptor (OXTR) (Ki=110 nM).

The protein localises to the secreted. Its function is as follows. Neurophysin 2 specifically binds vasopressin. Functionally, vasopressin has a direct antidiuretic action on the kidney, it also causes vasoconstriction of the peripheral vessels. Acts by binding to vasopressin receptors (V1bR/AVPR1B, V1aR/AVPR1A, and V2R/AVPR2). The sequence is that of Vasopressin-neurophysin 2-copeptin (AVP) from Bos taurus (Bovine).